Here is a 64-residue protein sequence, read N- to C-terminus: Large ribosomal subunit protein bL33 (64 aa).

The protein belongs to the bacterial ribosomal protein bL33 family.

The chain is Large ribosomal subunit protein bL33 from Prochlorococcus marinus (strain MIT 9313).